The chain runs to 316 residues: Ribosomal RNA small subunit methyltransferase H (316 aa).

Residues 35–37, Asp-55, Phe-84, Asp-105, and Gln-112 each bind S-adenosyl-L-methionine; that span reads SGH.

This sequence belongs to the methyltransferase superfamily. RsmH family.

It localises to the cytoplasm. It catalyses the reaction cytidine(1402) in 16S rRNA + S-adenosyl-L-methionine = N(4)-methylcytidine(1402) in 16S rRNA + S-adenosyl-L-homocysteine + H(+). Functionally, specifically methylates the N4 position of cytidine in position 1402 (C1402) of 16S rRNA. In Streptococcus equi subsp. zooepidemicus (strain H70), this protein is Ribosomal RNA small subunit methyltransferase H.